Reading from the N-terminus, the 518-residue chain is GMP synthase [glutamine-hydrolyzing] (518 aa).

The 191-residue stretch at Lys13–Asp203 folds into the Glutamine amidotransferase type-1 domain. Catalysis depends on Cys90, which acts as the Nucleophile. Active-site residues include His177 and Glu179. In terms of domain architecture, GMPS ATP-PPase spans Trp204–Arg393. Position 231 to 237 (Ser231 to Ser237) interacts with ATP.

Homodimer.

The catalysed reaction is XMP + L-glutamine + ATP + H2O = GMP + L-glutamate + AMP + diphosphate + 2 H(+). The protein operates within purine metabolism; GMP biosynthesis; GMP from XMP (L-Gln route): step 1/1. Its function is as follows. Catalyzes the synthesis of GMP from XMP. This Listeria monocytogenes serovar 1/2a (strain ATCC BAA-679 / EGD-e) protein is GMP synthase [glutamine-hydrolyzing].